We begin with the raw amino-acid sequence, 445 residues long: Disintegrin and metalloproteinase domain-containing protein 18 (445 aa).

The Peptidase M12B domain maps to 1-106; sequence IYRKHLKYIG…LDMQCLGDLS (106 aa). At 1–409 the chain is on the extracellular side; the sequence is IYRKHLKYIG…TKRLSQHADS (409 aa). Intrachain disulfides connect C18-C101, C60-C85, and C62-C67. N-linked (GlcNAc...) asparagine glycosylation is found at N19 and N59. N-linked (GlcNAc...) asparagine glycosylation is found at N84 and N131. A Disintegrin domain is found at 113–202; it reads QSVCGNGIVE…HCVPDTFALD (90 aa). C173 and C194 form a disulfide bridge. N333 and N340 each carry an N-linked (GlcNAc...) asparagine glycan. In terms of domain architecture, EGF-like spans 342 to 376; sequence TGNDCNAAKKCKGNGICNNFGHCQCFPDYRPPDCN. 3 cysteine pairs are disulfide-bonded: C346–C358, C352–C364, and C366–C375. A helical membrane pass occupies residues 410–430; that stretch reads WVILGFFIFLPFIMTLFLGII. Residues 431–445 lie on the Cytoplasmic side of the membrane; that stretch reads KRNERKIVPQKEQER.

In terms of processing, the prodomain and the metalloprotease-like domain are cleaved during the epididymal maturation of the spermatozoa. In terms of tissue distribution, expressed specifically in testis.

It is found in the membrane. Its function is as follows. Sperm surface membrane protein that may be involved in spermatogenesis and fertilization. This is a non catalytic metalloprotease-like protein. This chain is Disintegrin and metalloproteinase domain-containing protein 18 (Adam18), found in Rattus norvegicus (Rat).